Reading from the N-terminus, the 89-residue chain is Small ribosomal subunit protein uS15 (89 aa).

Belongs to the universal ribosomal protein uS15 family. In terms of assembly, part of the 30S ribosomal subunit. Forms a bridge to the 50S subunit in the 70S ribosome, contacting the 23S rRNA.

Its function is as follows. One of the primary rRNA binding proteins, it binds directly to 16S rRNA where it helps nucleate assembly of the platform of the 30S subunit by binding and bridging several RNA helices of the 16S rRNA. In terms of biological role, forms an intersubunit bridge (bridge B4) with the 23S rRNA of the 50S subunit in the ribosome. The polypeptide is Small ribosomal subunit protein uS15 (Buchnera aphidicola subsp. Baizongia pistaciae (strain Bp)).